Reading from the N-terminus, the 116-residue chain is Ribonuclease P protein component (116 aa).

It belongs to the RnpA family. In terms of assembly, consists of a catalytic RNA component (M1 or rnpB) and a protein subunit.

It carries out the reaction Endonucleolytic cleavage of RNA, removing 5'-extranucleotides from tRNA precursor.. RNaseP catalyzes the removal of the 5'-leader sequence from pre-tRNA to produce the mature 5'-terminus. It can also cleave other RNA substrates such as 4.5S RNA. The protein component plays an auxiliary but essential role in vivo by binding to the 5'-leader sequence and broadening the substrate specificity of the ribozyme. In Geobacter sp. (strain M21), this protein is Ribonuclease P protein component.